We begin with the raw amino-acid sequence, 230 residues long: Somatolactin (230 aa).

Positions 1 to 23 (MMTAVKQSGVWAVLLWPYLLAVS) are cleaved as a signal peptide. 3 disulfides stabilise this stretch: Cys28-Cys38, Cys88-Cys204, and Cys221-Cys229. Residues Asn34 and Asn144 are each glycosylated (N-linked (GlcNAc...) asparagine).

The protein belongs to the somatotropin/prolactin family. Pituitary gland.

The protein localises to the secreted. This is Somatolactin from Solea senegalensis (Senegalese sole).